Here is a 335-residue protein sequence, read N- to C-terminus: MKVEFAPLNIPLARRLQTTAVFQWVFSFLLLAQCCIGIFICLVLARVWLLLALYVLWLYLDWETPQAGGRRWEWVRNWPVWKYFKDYFPIRLVKTCDLDPQHNYIMGFHPHGVLVAGAFGNFCTNYTGFKELFPGLTPYLHILPFWFRCPFFREYIMSVGLVSASKKSVNHVLSKEDGGNVSIIVTGGAEESLDAHPGSLTLNILKRKGFIKVALKRGAYLVPVFSFGENELFQQVSNPKGSLLRCVQERLQRIMGLAMPLFHARGIFQYSFGLMPYRMPIHTVVGRPIPVKETSHPTQEEIESLHQQYLGALQELFEEHKKRYGIPEHESLIFI.

2 consecutive transmembrane segments (helical) span residues tryptophan 24–leucine 44 and valine 47–alanine 67. Asparagine 125 and asparagine 180 each carry an N-linked (GlcNAc...) asparagine glycan.

It belongs to the diacylglycerol acyltransferase family.

It is found in the endoplasmic reticulum membrane. It carries out the reaction a 2-acylglycerol + an acyl-CoA = a 1,2-diacylglycerol + CoA. It catalyses the reaction a 2-acylglycerol + an acyl-CoA = a 1,2-diacyl-sn-glycerol + CoA. The catalysed reaction is a 2-acylglycerol + an acyl-CoA = a 2,3-diacyl-sn-glycerol + CoA. The enzyme catalyses a 1-acylglycerol + an acyl-CoA = a 1,2-diacylglycerol + CoA. It carries out the reaction a 1-acylglycerol + an acyl-CoA = a 1,3-diacylglycerol + CoA. It catalyses the reaction a 1-acyl-sn-glycerol + an acyl-CoA = a 1,3-diacyl-sn-glycerol + CoA. The catalysed reaction is a 3-acyl-sn-glycerol + an acyl-CoA = a 1,3-diacyl-sn-glycerol + CoA. The protein operates within glycerolipid metabolism; triacylglycerol biosynthesis. In terms of biological role, involved in glycerolipid synthesis and lipid metabolism. Catalyzes the formation of diacylglycerol, the precursor of triacylglycerol, by transferring the acyl chain of a fatty acyl-CoA to a monoacylglycerol, mainly at the sn-1 or sn-3 positions. It uses both sn-2-monoacylglycerol (2-acylglycerol) and sn-1-monoacylglycerol (1-acyl-sn-glycerol) equally well as substrates, and uses sn-3-monoacylglycerol (3-acyl-sn-glycerol) with lower efficiency. This chain is 2-acylglycerol O-acyltransferase 1 (mogat1), found in Xenopus laevis (African clawed frog).